The sequence spans 518 residues: Sensor protein kinase HptS (518 aa).

The next 2 helical transmembrane spans lie at 20 to 40 (IFPV…IYIW) and 222 to 242 (GITL…FGFI). In terms of domain architecture, Histidine kinase spans 297 to 513 (EQLIHSIEHT…LICYKIPLSR (217 aa)). H325 is modified (phosphohistidine; by autocatalysis).

In terms of processing, autophosphorylated.

It localises to the cell membrane. The catalysed reaction is ATP + protein L-histidine = ADP + protein N-phospho-L-histidine.. Functionally, member of the two-component regulatory system HptS/HptR that regulates genes involved in hexose phosphate transport system in response to changes in extracellular phosphate sources. May act as a sensor protein kinase which is autophosphorylated at a histidine residue and transfers its phosphate group to the conserved aspartic acid residue in the regulatory domain of HptS. In turn, HptS antagonizes CcpA-dependent transcription of a subset of CcpA-regulated genes involved in antibiotic susceptibility. This chain is Sensor protein kinase HptS (hptS), found in Staphylococcus aureus (strain MSSA476).